The sequence spans 479 residues: Aspartyl/glutamyl-tRNA(Asn/Gln) amidotransferase subunit B (479 aa).

This sequence belongs to the GatB/GatE family. GatB subfamily. In terms of assembly, heterotrimer of A, B and C subunits.

It carries out the reaction L-glutamyl-tRNA(Gln) + L-glutamine + ATP + H2O = L-glutaminyl-tRNA(Gln) + L-glutamate + ADP + phosphate + H(+). The catalysed reaction is L-aspartyl-tRNA(Asn) + L-glutamine + ATP + H2O = L-asparaginyl-tRNA(Asn) + L-glutamate + ADP + phosphate + 2 H(+). Allows the formation of correctly charged Asn-tRNA(Asn) or Gln-tRNA(Gln) through the transamidation of misacylated Asp-tRNA(Asn) or Glu-tRNA(Gln) in organisms which lack either or both of asparaginyl-tRNA or glutaminyl-tRNA synthetases. The reaction takes place in the presence of glutamine and ATP through an activated phospho-Asp-tRNA(Asn) or phospho-Glu-tRNA(Gln). This Deinococcus radiodurans (strain ATCC 13939 / DSM 20539 / JCM 16871 / CCUG 27074 / LMG 4051 / NBRC 15346 / NCIMB 9279 / VKM B-1422 / R1) protein is Aspartyl/glutamyl-tRNA(Asn/Gln) amidotransferase subunit B.